Here is a 1024-residue protein sequence, read N- to C-terminus: Importin-8 (1024 aa).

The 81-residue stretch at 22-102 folds into the Importin N-terminal domain; sequence AENELNQSYK…RENMVEAIIR (81 aa). Positions 896-969 are disordered; sequence FGRAQGSEEE…YSTPLDCDNG (74 aa). Acidic residues-rich tracts occupy residues 902–917 and 934–952; these read SEEE…EDEV and DNED…DEGL.

This sequence belongs to the importin beta family.

Its subcellular location is the cytoplasm. It is found in the nucleus. In terms of biological role, involved in nuclear protein import, either by acting as autonomous nuclear transport receptor or as an adapter-like protein in association with the importin-beta subunit KPNB1. Acting autonomously, may serve as receptor for nuclear localization signals (NLS) and promote translocation of import substrates through the nuclear pore complex (NPC) by an energy requiring, Ran-dependent mechanism. At the nucleoplasmic side of the NPC, Ran binds to importin, the importin/substrate complex dissociates and importin is re-exported from the nucleus to the cytoplasm where GTP hydrolysis releases Ran. The directionality of nuclear import is thought to be conferred by an asymmetric distribution of the GTP- and GDP-bound forms of Ran between the cytoplasm and nucleus. In vitro mediates the nuclear import of the signal recognition particle protein SRP19. May also be involved in cytoplasm-to-nucleus shuttling of a broad spectrum of other cargos, including Argonaute-microRNAs complexes, the JUN protein, RELA/NF-kappa-B p65 subunit, the translation initiation factor EIF4E and a set of receptor-activated mothers against decapentaplegic homolog (SMAD) transcription factors that play a critical role downstream of the large family of transforming growth factor beta and bone morphogenetic protein (BMP) cytokines. In Danio rerio (Zebrafish), this protein is Importin-8 (ipo8).